Here is an 846-residue protein sequence, read N- to C-terminus: Cap-specific mRNA (nucleoside-2'-O-)-methyltransferase 1 (846 aa).

The disordered stretch occupies residues 1–81; the sequence is MKRKSDSEQQ…LPDTLAEGSS (81 aa). Positions 2 to 20 match the Bipartite nuclear localization signal motif; the sequence is KRKSDSEQQPSVQCRKKKR. A compositionally biased stretch (polar residues) spans 27–45; it reads NLSSTSDDDTQYSNHGTQE. A G-patch domain is found at 87-133; the sequence is YNSVSQKLMAKMGFREGEGLGKFGQGRKEIVETSKQKGRRGLGMVLK. Substrate is bound by residues 203–207 and Arg-218; that span reads KSAFD. Residues 231-450 form the RrmJ-type SAM-dependent 2'-O-MTase domain; that stretch reads FFLNRAAMKM…ERYVVCRGLK (220 aa). Residue Asn-234 coordinates S-adenosyl-L-methionine. Residue Lys-239 is part of the active site. S-adenosyl-L-methionine contacts are provided by residues 277-283 and 335-336; these read CAGPGGF and DV. Asp-364 is a catalytic residue. A substrate-binding site is contributed by 374–376; the sequence is NIQ. Residue Lys-404 is the Proton acceptor of the active site. Asn-439 is a substrate binding site. The 35-residue stretch at 752-786 folds into the WW domain; the sequence is KTINEPWSMAYSKSQKRKYFYNSKTKNSQFELPVE.

It is found in the nucleus. It catalyses the reaction a 5'-end (N(7)-methyl 5'-triphosphoguanosine)-ribonucleoside in mRNA + S-adenosyl-L-methionine = a 5'-end (N(7)-methyl 5'-triphosphoguanosine)-(2'-O-methyl-ribonucleoside) in mRNA + S-adenosyl-L-homocysteine + H(+). Functionally, S-adenosyl-L-methionine-dependent methyltransferase that mediates mRNA cap1 2'-O-ribose methylation to the 5'-cap structure of mRNAs. Methylates the ribose of the first nucleotide of a m(7)GpppG-capped mRNA and small nuclear RNA (snRNA) to produce m(7)GpppRm (cap1). Displays a preference for cap0 transcripts. Cap1 modification is linked to higher levels of translation. May be involved in the interferon response pathway. This is Cap-specific mRNA (nucleoside-2'-O-)-methyltransferase 1 (cmtr1) from Xenopus laevis (African clawed frog).